The primary structure comprises 188 residues: dCTP deaminase (188 aa).

DCTP-binding positions include 111–116 (KSTYAR), 135–137 (VLE), Gln-156, Tyr-170, and Gln-180. Glu-137 acts as the Proton donor/acceptor in catalysis.

It belongs to the dCTP deaminase family. In terms of assembly, homotrimer.

The catalysed reaction is dCTP + H2O + H(+) = dUTP + NH4(+). The protein operates within pyrimidine metabolism; dUMP biosynthesis; dUMP from dCTP (dUTP route): step 1/2. Its function is as follows. Catalyzes the deamination of dCTP to dUTP. This is dCTP deaminase from Protochlamydia amoebophila (strain UWE25).